Reading from the N-terminus, the 239-residue chain is DNA repair protein RecO (239 aa).

Belongs to the RecO family.

Its function is as follows. Involved in DNA repair and RecF pathway recombination. The protein is DNA repair protein RecO of Glaesserella parasuis serovar 5 (strain SH0165) (Haemophilus parasuis).